The chain runs to 451 residues: Serine--tRNA ligase (451 aa).

Residue 247-249 participates in L-serine binding; the sequence is TAE. ATP is bound by residues 278–280 and Val294; that span reads RKE. Glu301 lines the L-serine pocket. 365 to 368 lines the ATP pocket; the sequence is ELAS. Residue Thr400 participates in L-serine binding.

This sequence belongs to the class-II aminoacyl-tRNA synthetase family. Type-1 seryl-tRNA synthetase subfamily. Homodimer. The tRNA molecule binds across the dimer.

Its subcellular location is the cytoplasm. The enzyme catalyses tRNA(Ser) + L-serine + ATP = L-seryl-tRNA(Ser) + AMP + diphosphate + H(+). It catalyses the reaction tRNA(Sec) + L-serine + ATP = L-seryl-tRNA(Sec) + AMP + diphosphate + H(+). Its pathway is aminoacyl-tRNA biosynthesis; selenocysteinyl-tRNA(Sec) biosynthesis; L-seryl-tRNA(Sec) from L-serine and tRNA(Sec): step 1/1. Functionally, catalyzes the attachment of serine to tRNA(Ser). Is also able to aminoacylate tRNA(Sec) with serine, to form the misacylated tRNA L-seryl-tRNA(Sec), which will be further converted into selenocysteinyl-tRNA(Sec). This chain is Serine--tRNA ligase, found in Pyrobaculum aerophilum (strain ATCC 51768 / DSM 7523 / JCM 9630 / CIP 104966 / NBRC 100827 / IM2).